Here is a 286-residue protein sequence, read N- to C-terminus: Bifunctional protein FolD (286 aa).

Residues 165–167 (GRS) and S190 contribute to the NADP(+) site.

Belongs to the tetrahydrofolate dehydrogenase/cyclohydrolase family. As to quaternary structure, homodimer.

It catalyses the reaction (6R)-5,10-methylene-5,6,7,8-tetrahydrofolate + NADP(+) = (6R)-5,10-methenyltetrahydrofolate + NADPH. It carries out the reaction (6R)-5,10-methenyltetrahydrofolate + H2O = (6R)-10-formyltetrahydrofolate + H(+). The protein operates within one-carbon metabolism; tetrahydrofolate interconversion. Functionally, catalyzes the oxidation of 5,10-methylenetetrahydrofolate to 5,10-methenyltetrahydrofolate and then the hydrolysis of 5,10-methenyltetrahydrofolate to 10-formyltetrahydrofolate. This Paraburkholderia xenovorans (strain LB400) protein is Bifunctional protein FolD.